We begin with the raw amino-acid sequence, 363 residues long: Phospho-N-acetylmuramoyl-pentapeptide-transferase (363 aa).

A run of 10 helical transmembrane segments spans residues 15–33, 82–102, 106–126, 147–167, 183–203, 207–227, 233–253, 260–280, 285–305, and 341–361; these read FTTLFFLITLSLIVNSFIF, NTPTMGGIFIILPLLLLLLIV, FYSMGIILLFFGSLSFFIIGF, FILQSLISILFIVLAYQNGYI, IVIFPICFVTLVGLSNAVNLT, DGLASGCGSIVFYGLGTEIFI, LIIYGLIAYAMSGLCVGFLKF, IFMGDTGSLTIGATLGYISIL, FTLFIISGIFVIEALSVIIQV, and IVENFWKINILLVILGIVLKI.

It belongs to the glycosyltransferase 4 family. MraY subfamily. Mg(2+) serves as cofactor.

It is found in the cell inner membrane. It catalyses the reaction UDP-N-acetyl-alpha-D-muramoyl-L-alanyl-gamma-D-glutamyl-meso-2,6-diaminopimeloyl-D-alanyl-D-alanine + di-trans,octa-cis-undecaprenyl phosphate = di-trans,octa-cis-undecaprenyl diphospho-N-acetyl-alpha-D-muramoyl-L-alanyl-D-glutamyl-meso-2,6-diaminopimeloyl-D-alanyl-D-alanine + UMP. Its pathway is cell wall biogenesis; peptidoglycan biosynthesis. Its function is as follows. Catalyzes the initial step of the lipid cycle reactions in the biosynthesis of the cell wall peptidoglycan: transfers peptidoglycan precursor phospho-MurNAc-pentapeptide from UDP-MurNAc-pentapeptide onto the lipid carrier undecaprenyl phosphate, yielding undecaprenyl-pyrophosphoryl-MurNAc-pentapeptide, known as lipid I. This Prochlorococcus marinus (strain MIT 9515) protein is Phospho-N-acetylmuramoyl-pentapeptide-transferase.